We begin with the raw amino-acid sequence, 38 residues long: Large ribosomal subunit protein bL36A (38 aa).

It belongs to the bacterial ribosomal protein bL36 family.

This Pseudomonas aeruginosa (strain UCBPP-PA14) protein is Large ribosomal subunit protein bL36A.